Reading from the N-terminus, the 192-residue chain is Ubiquitin-conjugating enzyme E2 T (192 aa).

Positions 2 to 152 constitute a UBC core domain; it reads QRVSRLKREL…AKKWTEKHAL (151 aa). C86 serves as the catalytic Glycyl thioester intermediate. The segment at 150-192 is disordered; it reads HALPAPQGSDKESQEKSGSSEGTSHKRKSAEIAEESKKPCREP. The segment covering 178–192 has biased composition (basic and acidic residues); the sequence is SAEIAEESKKPCREP.

This sequence belongs to the ubiquitin-conjugating enzyme family.

It is found in the nucleus. It catalyses the reaction S-ubiquitinyl-[E1 ubiquitin-activating enzyme]-L-cysteine + [E2 ubiquitin-conjugating enzyme]-L-cysteine = [E1 ubiquitin-activating enzyme]-L-cysteine + S-ubiquitinyl-[E2 ubiquitin-conjugating enzyme]-L-cysteine.. The protein operates within protein modification; protein ubiquitination. In terms of biological role, accepts ubiquitin from the E1 complex and catalyzes its covalent attachment to other proteins. Catalyzes monoubiquitination. Involved in DNA repair. This is Ubiquitin-conjugating enzyme E2 T (ube2t) from Xenopus laevis (African clawed frog).